The chain runs to 133 residues: Ribonuclease P protein component (133 aa).

The protein belongs to the RnpA family. As to quaternary structure, consists of a catalytic RNA component (M1 or rnpB) and a protein subunit.

It carries out the reaction Endonucleolytic cleavage of RNA, removing 5'-extranucleotides from tRNA precursor.. Its function is as follows. RNaseP catalyzes the removal of the 5'-leader sequence from pre-tRNA to produce the mature 5'-terminus. It can also cleave other RNA substrates such as 4.5S RNA. The protein component plays an auxiliary but essential role in vivo by binding to the 5'-leader sequence and broadening the substrate specificity of the ribozyme. This chain is Ribonuclease P protein component, found in Corynebacterium glutamicum (strain R).